A 1151-amino-acid polypeptide reads, in one-letter code: Syntaxin-binding protein 5 (1151 aa).

The disordered stretch occupies residues 14–34 (TAGSSSASQQQQQQHPPGNRE). Positions 17 to 27 (SSSASQQQQQQ) are enriched in low complexity. 10 WD repeats span residues 61 to 94 (SALA…CYCQ), 101 to 140 (VIQL…SLKF), 145 to 181 (VTFC…GYVI), 200 to 234 (HISD…DYRY), 240 to 272 (IHSV…PAKP), 294 to 336 (PILK…KSTA), 344 to 378 (IVDF…LIDL), 400 to 477 (TCCE…YKLK), 505 to 619 (QIIS…ELVI), and 633 to 695 (TSLA…SGAG). Disordered stretches follow at residues 555-595 (ETPE…GLRD) and 674-729 (SNDP…EQKM). Ser-692 carries the phosphoserine modification. A compositionally biased stretch (low complexity) spans 712–721 (SPTSGSSSPH). At Ser-723 the chain carries Phosphoserine; by PKA. A Phosphoserine modification is found at Ser-759. Residue Thr-762 is modified to Phosphothreonine. Ser-782 carries the post-translational modification Phosphoserine. Thr-784 is modified (phosphothreonine). Ser-785 carries the phosphoserine modification. 4 WD repeats span residues 794 to 851 (ISAL…SGTI), 860 to 934 (RMAF…QNCA), 939 to 983 (ITET…LDVY), and 997 to 1020 (CFTN…TYSQ). The span at 881-892 (HNVPEEKDEKEK) shows a compositional bias: basic and acidic residues. Positions 881-906 (HNVPEEKDEKEKLKKRRPVSVSPSSS) are disordered. Phosphoserine is present on residues Ser-900 and Ser-902. Thr-1039 carries the phosphothreonine modification. Ser-1058 and Ser-1131 each carry phosphoserine. In terms of domain architecture, v-SNARE coiled-coil homology spans 1086 to 1146 (GIEGVKGAAS…HEIMLKYKDK (61 aa)).

It belongs to the WD repeat L(2)GL family. As to quaternary structure, interacts with STX1A and STX1B via its v-SNARE homology domain. Part of a complex that contains STX1, STXBP5, SNAP25 and SYT1. Part of a complex that contains STXBP5, STX4A and SNAP23.

The protein resides in the cytoplasm. It localises to the cell membrane. It is found in the cytoplasmic vesicle membrane. The protein localises to the cytoplasmic vesicle. Its subcellular location is the secretory vesicle. The protein resides in the synaptic vesicle. It localises to the synapse. Its function is as follows. Plays a regulatory role in calcium-dependent exocytosis and neurotransmitter release. Inhibits membrane fusion between transport vesicles and the plasma membrane. May modulate the assembly of trans-SNARE complexes between transport vesicles and the plasma membrane. Inhibits translocation of GLUT4 from intracellular vesicles to the plasma membrane. Competes with STXBP1 for STX1 binding. In Homo sapiens (Human), this protein is Syntaxin-binding protein 5 (STXBP5).